Here is a 387-residue protein sequence, read N- to C-terminus: Acetylornithine deacetylase (387 aa).

A Zn(2+)-binding site is contributed by His-80. The active site involves Asp-82. Asp-112 is a binding site for Zn(2+). Glu-144 is a catalytic residue. 3 residues coordinate Zn(2+): Glu-145, Glu-169, and His-355.

This sequence belongs to the peptidase M20A family. ArgE subfamily. In terms of assembly, homodimer. Zn(2+) serves as cofactor. Requires Co(2+) as cofactor. It depends on glutathione as a cofactor.

The protein resides in the cytoplasm. It catalyses the reaction N(2)-acetyl-L-ornithine + H2O = L-ornithine + acetate. It participates in amino-acid biosynthesis; L-arginine biosynthesis; L-ornithine from N(2)-acetyl-L-ornithine (linear): step 1/1. Its function is as follows. Catalyzes the hydrolysis of the amide bond of N(2)-acetylated L-amino acids. Cleaves the acetyl group from N-acetyl-L-ornithine to form L-ornithine, an intermediate in L-arginine biosynthesis pathway, and a branchpoint in the synthesis of polyamines. In Proteus mirabilis (strain HI4320), this protein is Acetylornithine deacetylase.